A 100-amino-acid chain; its full sequence is DNA-binding protein HU (100 aa).

Belongs to the bacterial histone-like protein family.

In terms of biological role, histone-like DNA-binding protein which is capable of wrapping DNA to stabilize it, and thus to prevent its denaturation under extreme environmental conditions. This chain is DNA-binding protein HU (hup), found in Synechocystis sp. (strain ATCC 27184 / PCC 6803 / Kazusa).